Reading from the N-terminus, the 434-residue chain is 4-hydroxy-3-methylbut-2-en-1-yl diphosphate synthase (flavodoxin) (434 aa).

The span at 1–15 (MQSEAQSPRSSQICS) shows a compositional bias: polar residues. The tract at residues 1 to 24 (MQSEAQSPRSSQICSTEPVFGGHQ) is disordered. [4Fe-4S] cluster contacts are provided by Cys322, Cys325, Cys368, and Glu375.

This sequence belongs to the IspG family. The cofactor is [4Fe-4S] cluster.

It catalyses the reaction (2E)-4-hydroxy-3-methylbut-2-enyl diphosphate + oxidized [flavodoxin] + H2O + 2 H(+) = 2-C-methyl-D-erythritol 2,4-cyclic diphosphate + reduced [flavodoxin]. It participates in isoprenoid biosynthesis; isopentenyl diphosphate biosynthesis via DXP pathway; isopentenyl diphosphate from 1-deoxy-D-xylulose 5-phosphate: step 5/6. Functionally, converts 2C-methyl-D-erythritol 2,4-cyclodiphosphate (ME-2,4cPP) into 1-hydroxy-2-methyl-2-(E)-butenyl 4-diphosphate. The chain is 4-hydroxy-3-methylbut-2-en-1-yl diphosphate synthase (flavodoxin) from Burkholderia cenocepacia (strain ATCC BAA-245 / DSM 16553 / LMG 16656 / NCTC 13227 / J2315 / CF5610) (Burkholderia cepacia (strain J2315)).